The following is a 180-amino-acid chain: MTARLQEFYKEKVVAELIKQFGYKSVMEVPRITKITLNMGLGEAVNDKKVIEHATGDLTKIAGQKPVVTKARKAIAGFKIRQGYPIGTMVTLRGQRMYEFLDRFITVSLPRVRDFRGVSGRAFDGRGNYNIGVKEQIIFPEIEYDKIDALRGLNISITTTAKSDEEAKALLAAFKFPFRN.

Belongs to the universal ribosomal protein uL5 family. As to quaternary structure, part of the 50S ribosomal subunit; part of the 5S rRNA/L5/L18/L25 subcomplex. Contacts the 5S rRNA and the P site tRNA. Forms a bridge to the 30S subunit in the 70S ribosome.

Its function is as follows. This is one of the proteins that bind and probably mediate the attachment of the 5S RNA into the large ribosomal subunit, where it forms part of the central protuberance. In the 70S ribosome it contacts protein S13 of the 30S subunit (bridge B1b), connecting the 2 subunits; this bridge is implicated in subunit movement. Contacts the P site tRNA; the 5S rRNA and some of its associated proteins might help stabilize positioning of ribosome-bound tRNAs. The polypeptide is Large ribosomal subunit protein uL5 (Ralstonia nicotianae (strain ATCC BAA-1114 / GMI1000) (Ralstonia solanacearum)).